The chain runs to 325 residues: Beta-ketoacyl-[acyl-carrier-protein] synthase III (325 aa).

Active-site residues include C113 and H250. An ACP-binding region spans residues Q251–R255. The active site involves N280.

This sequence belongs to the thiolase-like superfamily. FabH family. Homodimer.

It is found in the cytoplasm. The catalysed reaction is malonyl-[ACP] + acetyl-CoA + H(+) = 3-oxobutanoyl-[ACP] + CO2 + CoA. It functions in the pathway lipid metabolism; fatty acid biosynthesis. Catalyzes the condensation reaction of fatty acid synthesis by the addition to an acyl acceptor of two carbons from malonyl-ACP. Catalyzes the first condensation reaction which initiates fatty acid synthesis and may therefore play a role in governing the total rate of fatty acid production. Possesses both acetoacetyl-ACP synthase and acetyl transacylase activities. Its substrate specificity determines the biosynthesis of branched-chain and/or straight-chain of fatty acids. The chain is Beta-ketoacyl-[acyl-carrier-protein] synthase III from Streptococcus suis (strain 98HAH33).